A 932-amino-acid polypeptide reads, in one-letter code: Glycine dehydrogenase (decarboxylating) (932 aa).

Lys685 carries the post-translational modification N6-(pyridoxal phosphate)lysine.

Belongs to the GcvP family. As to quaternary structure, the glycine cleavage system is composed of four proteins: P, T, L and H. The cofactor is pyridoxal 5'-phosphate.

It catalyses the reaction N(6)-[(R)-lipoyl]-L-lysyl-[glycine-cleavage complex H protein] + glycine + H(+) = N(6)-[(R)-S(8)-aminomethyldihydrolipoyl]-L-lysyl-[glycine-cleavage complex H protein] + CO2. Functionally, the glycine cleavage system catalyzes the degradation of glycine. The P protein binds the alpha-amino group of glycine through its pyridoxal phosphate cofactor; CO(2) is released and the remaining methylamine moiety is then transferred to the lipoamide cofactor of the H protein. In Brucella suis (strain ATCC 23445 / NCTC 10510), this protein is Glycine dehydrogenase (decarboxylating).